The primary structure comprises 134 residues: Transcription antitermination protein NusB (134 aa).

It belongs to the NusB family.

Functionally, involved in transcription antitermination. Required for transcription of ribosomal RNA (rRNA) genes. Binds specifically to the boxA antiterminator sequence of the ribosomal RNA (rrn) operons. This Shewanella amazonensis (strain ATCC BAA-1098 / SB2B) protein is Transcription antitermination protein NusB.